The primary structure comprises 298 residues: Type II methyltransferase M.MjaIV (298 aa).

It carries out the reaction a 2'-deoxyadenosine in DNA + S-adenosyl-L-methionine = an N(6)-methyl-2'-deoxyadenosine in DNA + S-adenosyl-L-homocysteine + H(+). In terms of biological role, a methylase that recognizes the double-stranded sequence 5'-GTNNAC-3', methylates A-5 on both strands, and protects the DNA from cleavage by the MjaIV endonuclease. In Methanocaldococcus jannaschii (strain ATCC 43067 / DSM 2661 / JAL-1 / JCM 10045 / NBRC 100440) (Methanococcus jannaschii), this protein is Type II methyltransferase M.MjaIV (mjaIVMP).